The chain runs to 365 residues: DNA replication and repair protein RecF (365 aa).

30-37 provides a ligand contact to ATP; the sequence is GDNAQGKT.

This sequence belongs to the RecF family.

Its subcellular location is the cytoplasm. Its function is as follows. The RecF protein is involved in DNA metabolism; it is required for DNA replication and normal SOS inducibility. RecF binds preferentially to single-stranded, linear DNA. It also seems to bind ATP. The protein is DNA replication and repair protein RecF of Alkaliphilus oremlandii (strain OhILAs) (Clostridium oremlandii (strain OhILAs)).